The primary structure comprises 66 residues: Large ribosomal subunit protein bL31 (66 aa).

4 residues coordinate Zn(2+): cysteine 16, cysteine 18, cysteine 36, and cysteine 39.

Belongs to the bacterial ribosomal protein bL31 family. Type A subfamily. In terms of assembly, part of the 50S ribosomal subunit. It depends on Zn(2+) as a cofactor.

In terms of biological role, binds the 23S rRNA. This Campylobacter jejuni subsp. jejuni serotype O:6 (strain 81116 / NCTC 11828) protein is Large ribosomal subunit protein bL31.